Consider the following 353-residue polypeptide: MNLNSTSQLLVRNEEGLVGKILFANPEDTYPLDLSRKADVYAWCQSKTYYDALLRVGFADEKLFLSEQWALEHGSDFDHIVIYQPKAKELLDYLLASVLPLLKEGGQIWLVGDNKSGVKSSMKRLEAGLDEVGKRDGAKHCLLYTGYKRRPTKPFVFEDWITTWKQEVAGQTLTLCSLPGVFGHGKLDKGTDILLNQLNQHRFMSDVASARILDFGCGDGIIALWLHNKTGARITALDDSVMALKATELTFAANQVSDAVTLIASNGLDEVKGRFNYVVTNPPFHSGVNTDYSIAESFFMMVKQHLTLNGELFVVANDFLRYPPILDAALGSHTRLYRDRGFAIYHGRQPKKK.

This sequence belongs to the methyltransferase superfamily. RsmC family. Monomer.

It localises to the cytoplasm. The enzyme catalyses guanosine(1207) in 16S rRNA + S-adenosyl-L-methionine = N(2)-methylguanosine(1207) in 16S rRNA + S-adenosyl-L-homocysteine + H(+). Its function is as follows. Specifically methylates the guanine in position 1207 of 16S rRNA in the 30S particle. This Marinomonas sp. (strain MWYL1) protein is Ribosomal RNA small subunit methyltransferase C.